A 280-amino-acid polypeptide reads, in one-letter code: Energy-coupling factor transporter ATP-binding protein EcfA2 (280 aa).

The 243-residue stretch at 3 to 245 (INLQNVSYTY…VSLLEKKQLG (243 aa)) folds into the ABC transporter domain. Residue 40 to 47 (GHTGSGKS) coordinates ATP.

The protein belongs to the ABC transporter superfamily. Energy-coupling factor EcfA family. In terms of assembly, forms a stable energy-coupling factor (ECF) transporter complex composed of 2 membrane-embedded substrate-binding proteins (S component), 2 ATP-binding proteins (A component) and 2 transmembrane proteins (T component).

Its subcellular location is the cell membrane. Functionally, ATP-binding (A) component of a common energy-coupling factor (ECF) ABC-transporter complex. Unlike classic ABC transporters this ECF transporter provides the energy necessary to transport a number of different substrates. The protein is Energy-coupling factor transporter ATP-binding protein EcfA2 of Streptococcus pyogenes serotype M3 (strain ATCC BAA-595 / MGAS315).